The sequence spans 302 residues: Protein FLOURY 1 (302 aa).

2 helical membrane passes run 27–47 (SAGA…VAVL) and 82–102 (LAGS…FLAV). Residues 160-195 (SSKPVSRSLAAEFDQEADGEEEDNAGETSDPDDGSV) are disordered. A compositionally biased stretch (acidic residues) spans 172–192 (FDQEADGEEEDNAGETSDPDD). The GTD-binding domain occupies 193–299 (GSVQYLRRRL…ALSETSEDDR (107 aa)). Residues 199–254 (RRRLKEEMLLKEVALEELEKERHAAASAADEAMSKIACLRSEKALVEREARQFQEM) adopt a coiled-coil conformation. The segment at 283 to 302 (PEAITDRALSETSEDDRDKK) is disordered.

As to quaternary structure, interacts (via C-terminus) with both 22 kDa and 19 kDa alpha-zeins. Interacts (via C-terminus) with OP10 (via N-terminus). Expressed in endosperm. Not detected in embryo, leaves and roots.

It is found in the endoplasmic reticulum membrane. In terms of biological role, involved in protein body development and 22 kDa alpha-zein localization. This is Protein FLOURY 1 from Zea mays (Maize).